The chain runs to 295 residues: 33 kDa chaperonin (295 aa).

Disulfide bonds link Cys233-Cys235 and Cys267-Cys270.

The protein belongs to the HSP33 family. Under oxidizing conditions two disulfide bonds are formed involving the reactive cysteines. Under reducing conditions zinc is bound to the reactive cysteines and the protein is inactive.

The protein resides in the cytoplasm. Its function is as follows. Redox regulated molecular chaperone. Protects both thermally unfolding and oxidatively damaged proteins from irreversible aggregation. Plays an important role in the bacterial defense system toward oxidative stress. This Mannheimia succiniciproducens (strain KCTC 0769BP / MBEL55E) protein is 33 kDa chaperonin.